A 177-amino-acid polypeptide reads, in one-letter code: Nucleoside triphosphate/diphosphate phosphatase (177 aa).

The active-site Proton donor is R23. Mg(2+)-binding residues include N87, D103, D105, D107, D120, and E123.

The protein belongs to the Ntdp family. It depends on Mg(2+) as a cofactor.

The catalysed reaction is a ribonucleoside 5'-triphosphate + H2O = a ribonucleoside 5'-diphosphate + phosphate + H(+). The enzyme catalyses a ribonucleoside 5'-diphosphate + H2O = a ribonucleoside 5'-phosphate + phosphate + H(+). Functionally, has nucleoside phosphatase activity towards nucleoside triphosphates and nucleoside diphosphates. The sequence is that of Nucleoside triphosphate/diphosphate phosphatase from Streptococcus pneumoniae serotype 19F (strain G54).